The chain runs to 352 residues: Selenide, water dikinase (352 aa).

C23 is a catalytic residue. Residues K26 and 54 to 56 each bind ATP; that span reads SRD. Position 57 (D57) interacts with Mg(2+). ATP is bound by residues D74, D97, and 145-147; that span reads GHS. Residue D97 participates in Mg(2+) binding. D233 serves as a coordination point for Mg(2+).

The protein belongs to the selenophosphate synthase 1 family. Class I subfamily. Homodimer. Requires Mg(2+) as cofactor.

The enzyme catalyses hydrogenselenide + ATP + H2O = selenophosphate + AMP + phosphate + 2 H(+). Synthesizes selenophosphate from selenide and ATP. This chain is Selenide, water dikinase, found in Shewanella putrefaciens (strain CN-32 / ATCC BAA-453).